A 182-amino-acid polypeptide reads, in one-letter code: MSDSKVNMVSPPEGLTGEGFFATKLNDVVGLARANSLWPLPFATSCCGIEFMATMAAHYDLARFGSERVSFSPRQADMLLVMGTISKKMAPILRQVYEQMSEPRWVIAVGACASSGGVFDTYSVLQGIDKVIPVDVYVPGCPPRPEQIVDGVMRLQELVKSESVRRRSSPEYQELLASYNIS.

4 residues coordinate [4Fe-4S] cluster: Cys-46, Cys-47, Cys-112, and Cys-141.

The protein belongs to the complex I 20 kDa subunit family. As to quaternary structure, NDH-1 is composed of 14 different subunits. Subunits NuoB, C, D, E, F, and G constitute the peripheral sector of the complex. Requires [4Fe-4S] cluster as cofactor.

Its subcellular location is the cell inner membrane. It carries out the reaction a quinone + NADH + 5 H(+)(in) = a quinol + NAD(+) + 4 H(+)(out). Its function is as follows. NDH-1 shuttles electrons from NADH, via FMN and iron-sulfur (Fe-S) centers, to quinones in the respiratory chain. The immediate electron acceptor for the enzyme in this species is believed to be a menaquinone. Couples the redox reaction to proton translocation (for every two electrons transferred, four hydrogen ions are translocated across the cytoplasmic membrane), and thus conserves the redox energy in a proton gradient. This chain is NADH-quinone oxidoreductase subunit B, found in Flavobacterium johnsoniae (strain ATCC 17061 / DSM 2064 / JCM 8514 / BCRC 14874 / CCUG 350202 / NBRC 14942 / NCIMB 11054 / UW101) (Cytophaga johnsonae).